A 128-amino-acid polypeptide reads, in one-letter code: Large ribosomal subunit protein bL12 (128 aa).

Belongs to the bacterial ribosomal protein bL12 family. In terms of assembly, homodimer. Part of the ribosomal stalk of the 50S ribosomal subunit. Forms a multimeric L10(L12)X complex, where L10 forms an elongated spine to which 2 to 4 L12 dimers bind in a sequential fashion. Binds GTP-bound translation factors.

Its function is as follows. Forms part of the ribosomal stalk which helps the ribosome interact with GTP-bound translation factors. Is thus essential for accurate translation. The chain is Large ribosomal subunit protein bL12 from Trichormus variabilis (strain ATCC 29413 / PCC 7937) (Anabaena variabilis).